An 889-amino-acid chain; its full sequence is DNA mismatch repair protein MutS (889 aa).

The span at 1–17 (MPKTNSSAASTNANPSS) shows a compositional bias: low complexity. The segment at 1-20 (MPKTNSSAASTNANPSSLQQ) is disordered. 640 to 647 (GPNMGGKS) serves as a coordination point for ATP.

The protein belongs to the DNA mismatch repair MutS family.

Functionally, this protein is involved in the repair of mismatches in DNA. It is possible that it carries out the mismatch recognition step. This protein has a weak ATPase activity. The polypeptide is DNA mismatch repair protein MutS (Pseudoalteromonas atlantica (strain T6c / ATCC BAA-1087)).